The chain runs to 415 residues: DNA polymerase IV (415 aa).

The UmuC domain maps to 15–196; that stretch reads ILHVDMNCFF…LSVEAMHGIG (182 aa). Mg(2+)-binding residues include Asp19 and Asp115. Glu116 is an active-site residue. Residues 235-246 are compositionally biased toward basic and acidic residues; sequence KRAKGTDDREVD. The tract at residues 235–260 is disordered; that stretch reads KRAKGTDDREVDPSQMGQHKSVGNSM. Over residues 249–260 the composition is skewed to polar residues; the sequence is QMGQHKSVGNSM.

Belongs to the DNA polymerase type-Y family. As to quaternary structure, monomer. It depends on Mg(2+) as a cofactor.

Its subcellular location is the cytoplasm. The catalysed reaction is DNA(n) + a 2'-deoxyribonucleoside 5'-triphosphate = DNA(n+1) + diphosphate. Its function is as follows. Poorly processive, error-prone DNA polymerase involved in untargeted mutagenesis. Copies undamaged DNA at stalled replication forks, which arise in vivo from mismatched or misaligned primer ends. These misaligned primers can be extended by PolIV. Exhibits no 3'-5' exonuclease (proofreading) activity. May be involved in translesional synthesis, in conjunction with the beta clamp from PolIII. The polypeptide is DNA polymerase IV (Bacillus cereus (strain ATCC 14579 / DSM 31 / CCUG 7414 / JCM 2152 / NBRC 15305 / NCIMB 9373 / NCTC 2599 / NRRL B-3711)).